The chain runs to 195 residues: ATP-dependent Clp protease proteolytic subunit (195 aa).

The active-site Nucleophile is the Ser-99. The active site involves His-124.

Belongs to the peptidase S14 family. In terms of assembly, fourteen ClpP subunits assemble into 2 heptameric rings which stack back to back to give a disk-like structure with a central cavity, resembling the structure of eukaryotic proteasomes.

It localises to the cytoplasm. It catalyses the reaction Hydrolysis of proteins to small peptides in the presence of ATP and magnesium. alpha-casein is the usual test substrate. In the absence of ATP, only oligopeptides shorter than five residues are hydrolyzed (such as succinyl-Leu-Tyr-|-NHMec, and Leu-Tyr-Leu-|-Tyr-Trp, in which cleavage of the -Tyr-|-Leu- and -Tyr-|-Trp bonds also occurs).. Its function is as follows. Cleaves peptides in various proteins in a process that requires ATP hydrolysis. Has a chymotrypsin-like activity. Plays a major role in the degradation of misfolded proteins. This is ATP-dependent Clp protease proteolytic subunit from Carboxydothermus hydrogenoformans (strain ATCC BAA-161 / DSM 6008 / Z-2901).